The primary structure comprises 84 residues: Large ribosomal subunit protein bL27 (84 aa).

Positions 1–24 are disordered; sequence MAHKKGGGSSKNGRDSNSQRLGVK.

Belongs to the bacterial ribosomal protein bL27 family.

This is Large ribosomal subunit protein bL27 from Leptospira borgpetersenii serovar Hardjo-bovis (strain JB197).